We begin with the raw amino-acid sequence, 429 residues long: Antho-RFamide neuropeptides type 2 (429 aa).

Positions 1–22 (MTTVSYVTILLTVLVQVLTSDA) are cleaved as a signal peptide. The propeptide occupies 23–233 (KATNNKRELS…EFQGRFGRED (211 aa)). Residues 230–371 (GREDQGRFGR…EDIAKEDQGR (142 aa)) show a composition bias toward basic and acidic residues. A disordered region spans residues 230 to 429 (GREDQGRFGR…KSDDALAKIS (200 aa)). Gln-234 bears the Pyrrolidone carboxylic acid mark. Phenylalanine amide is present on Phe-237. The propeptide occupies 239–241 (RED). The residue at position 242 (Gln-242) is a Pyrrolidone carboxylic acid. Position 245 is a phenylalanine amide (Phe-245). Positions 247–249 (RED) are excised as a propeptide. A Pyrrolidone carboxylic acid modification is found at Gln-250. The residue at position 253 (Phe-253) is a Phenylalanine amide. Residues 255–257 (RED) constitute a propeptide that is removed on maturation. Gln-258 carries the pyrrolidone carboxylic acid modification. Phe-261 carries the post-translational modification Phenylalanine amide. The propeptide occupies 263–265 (RED). Gln-266 carries the pyrrolidone carboxylic acid modification. Phenylalanine amide is present on Phe-269. A propeptide spanning residues 271–273 (RED) is cleaved from the precursor. Gln-274 is modified (pyrrolidone carboxylic acid). A Phenylalanine amide modification is found at Phe-277. The propeptide occupies 279-289 (RELQGRFGRED). Position 290 is a pyrrolidone carboxylic acid (Gln-290). Phe-293 bears the Phenylalanine amide mark. Residues 295–297 (RED) constitute a propeptide that is removed on maturation. Gln-298 carries the pyrrolidone carboxylic acid modification. Phe-301 carries the phenylalanine amide modification. A propeptide spanning residues 303–305 (RED) is cleaved from the precursor. Position 306 is a pyrrolidone carboxylic acid (Gln-306). A Phenylalanine amide modification is found at Phe-309. A propeptide spanning residues 311–321 (RELQGRFGRED) is cleaved from the precursor. Gln-322 carries the pyrrolidone carboxylic acid modification. Phe-325 bears the Phenylalanine amide mark. A propeptide spanning residues 327-329 (RED) is cleaved from the precursor. Gln-330 is modified (pyrrolidone carboxylic acid). Residue Phe-333 is modified to Phenylalanine amide. A propeptide spanning residues 335–342 (REDLAKED) is cleaved from the precursor. At Gln-343 the chain carries Pyrrolidone carboxylic acid. Phe-346 is subject to Phenylalanine amide. The propeptide occupies 348–355 (REDLAKED). Gln-356 bears the Pyrrolidone carboxylic acid mark. Phe-359 carries the phenylalanine amide modification. The propeptide occupies 361 to 368 (REDIAKED). Gln-369 is modified (pyrrolidone carboxylic acid). The residue at position 372 (Phe-372) is a Phenylalanine amide. The propeptide occupies 374–429 (RNAAAAAKKRTIDVIDIESDPKPQTRFRDGKDMQEKRKVEKKDKIEKSDDALAKIS). Residues 392–429 (SDPKPQTRFRDGKDMQEKRKVEKKDKIEKSDDALAKIS) show a composition bias toward basic and acidic residues.

It belongs to the FARP (FMRFamide related peptide) family.

It is found in the secreted. Its function is as follows. Not known but it could act as a transmitter at neuromuscular synapses. In Anthopleura elegantissima (Green aggregating anemone), this protein is Antho-RFamide neuropeptides type 2.